Consider the following 312-residue polypeptide: Aspartate carbamoyltransferase catalytic subunit (312 aa).

Residues Arg55 and Thr56 each contribute to the carbamoyl phosphate site. Lys83 contacts L-aspartate. Carbamoyl phosphate-binding residues include Arg105, His138, and Gln141. L-aspartate-binding residues include Arg171 and Arg225. Residues Gly266 and Pro267 each coordinate carbamoyl phosphate.

The protein belongs to the aspartate/ornithine carbamoyltransferase superfamily. ATCase family. Heterododecamer (2C3:3R2) of six catalytic PyrB chains organized as two trimers (C3), and six regulatory PyrI chains organized as three dimers (R2).

The enzyme catalyses carbamoyl phosphate + L-aspartate = N-carbamoyl-L-aspartate + phosphate + H(+). It participates in pyrimidine metabolism; UMP biosynthesis via de novo pathway; (S)-dihydroorotate from bicarbonate: step 2/3. Catalyzes the condensation of carbamoyl phosphate and aspartate to form carbamoyl aspartate and inorganic phosphate, the committed step in the de novo pyrimidine nucleotide biosynthesis pathway. This chain is Aspartate carbamoyltransferase catalytic subunit, found in Corynebacterium efficiens (strain DSM 44549 / YS-314 / AJ 12310 / JCM 11189 / NBRC 100395).